The sequence spans 1117 residues: DNA polymerase II large subunit (1117 aa).

The segment covering 279–294 (STKEEEKKKEESSENK) has biased composition (basic and acidic residues). The segment at 279-299 (STKEEEKKKEESSENKPKKKA) is disordered.

It belongs to the archaeal DNA polymerase II family. As to quaternary structure, heterodimer of a large subunit and a small subunit.

The catalysed reaction is DNA(n) + a 2'-deoxyribonucleoside 5'-triphosphate = DNA(n+1) + diphosphate. It carries out the reaction Exonucleolytic cleavage in the 3'- to 5'-direction to yield nucleoside 5'-phosphates.. Its function is as follows. Possesses two activities: a DNA synthesis (polymerase) and an exonucleolytic activity that degrades single-stranded DNA in the 3'- to 5'-direction. Has a template-primer preference which is characteristic of a replicative DNA polymerase. This chain is DNA polymerase II large subunit, found in Methanosphaera stadtmanae (strain ATCC 43021 / DSM 3091 / JCM 11832 / MCB-3).